Reading from the N-terminus, the 224-residue chain is Flagellar L-ring protein (224 aa).

Residues methionine 1–alanine 15 form the signal peptide. Cysteine 16 carries N-palmitoyl cysteine lipidation. Cysteine 16 carries S-diacylglycerol cysteine lipidation.

Belongs to the FlgH family. In terms of assembly, the basal body constitutes a major portion of the flagellar organelle and consists of four rings (L,P,S, and M) mounted on a central rod.

The protein localises to the cell outer membrane. It is found in the bacterial flagellum basal body. Functionally, assembles around the rod to form the L-ring and probably protects the motor/basal body from shearing forces during rotation. This chain is Flagellar L-ring protein, found in Shewanella sp. (strain ANA-3).